The sequence spans 298 residues: WRKY transcription factor 22 (298 aa).

Disordered regions lie at residues 75-116 (EEPR…IQHK) and 181-220 (AEHN…TYSS). Residues 88-103 (SLSASSGSVTSKPSGS) are compositionally biased toward low complexity. Residues 107 to 116 (RSKRRKIQHK) are compositionally biased toward basic residues. Positions 122–188 (AAEALNSDVW…YTAEHNHPAP (67 aa)) form a DNA-binding region, WRKY. Residues 190–220 (HRNSLAGSTRQKPSDQQTSKSPTTTIATYSS) are compositionally biased toward polar residues.

Belongs to the WRKY group II-e family.

The protein resides in the nucleus. In terms of biological role, transcription factor involved in the expression of defense genes in innate immune response of plants. Interacts specifically with the W box (5'-(T)TGAC[CT]-3'), a frequently occurring elicitor-responsive cis-acting element. Activates WRKY 29, SIRK and its own promoters. The polypeptide is WRKY transcription factor 22 (WRKY22) (Arabidopsis thaliana (Mouse-ear cress)).